A 369-amino-acid polypeptide reads, in one-letter code: Protein-glutamate methylesterase/protein-glutamine glutaminase (369 aa).

The Response regulatory domain occupies 4-121 (KVLVVDDSSF…ARNRDEAVSL (118 aa)). Residue Asp55 is modified to 4-aspartylphosphate. Over residues 146–171 (ATSSARPLASRTAAPAASAPARPATT) the composition is skewed to low complexity. Residues 146–175 (ATSSARPLASRTAAPAASAPARPATTKFRA) are disordered. One can recognise a CheB-type methylesterase domain in the interval 176–369 (SGKKYQLTAI…ERMLVEVGLA (194 aa)). Residues Ser188, His215, and Asp311 contribute to the active site.

Belongs to the CheB family. Phosphorylated by CheA. Phosphorylation of the N-terminal regulatory domain activates the methylesterase activity.

Its subcellular location is the cytoplasm. The enzyme catalyses [protein]-L-glutamate 5-O-methyl ester + H2O = L-glutamyl-[protein] + methanol + H(+). It catalyses the reaction L-glutaminyl-[protein] + H2O = L-glutamyl-[protein] + NH4(+). Its function is as follows. Involved in chemotaxis. Part of a chemotaxis signal transduction system that modulates chemotaxis in response to various stimuli. Catalyzes the demethylation of specific methylglutamate residues introduced into the chemoreceptors (methyl-accepting chemotaxis proteins or MCP) by CheR. Also mediates the irreversible deamidation of specific glutamine residues to glutamic acid. In Vibrio parahaemolyticus serotype O3:K6 (strain RIMD 2210633), this protein is Protein-glutamate methylesterase/protein-glutamine glutaminase.